The following is a 168-amino-acid chain: Probable chemoreceptor glutamine deamidase CheD 2 (168 aa).

The protein belongs to the CheD family.

The enzyme catalyses L-glutaminyl-[protein] + H2O = L-glutamyl-[protein] + NH4(+). In terms of biological role, probably deamidates glutamine residues to glutamate on methyl-accepting chemotaxis receptors (MCPs), playing an important role in chemotaxis. This chain is Probable chemoreceptor glutamine deamidase CheD 2, found in Leptospira interrogans serogroup Icterohaemorrhagiae serovar copenhageni (strain Fiocruz L1-130).